The sequence spans 316 residues: Mitochondrial distribution and morphology protein 12 (316 aa).

In terms of domain architecture, SMP-LTD spans 1 to 312 (MSIDLEWNGL…FPNFHTLVLG (312 aa)).

This sequence belongs to the MDM12 family. Component of the ER-mitochondria encounter structure (ERMES) or MDM complex, composed of MMM1, MDM10, MDM12 and MDM34. An MMM1 homodimer associates with one molecule of MDM12 on each side in a pairwise head-to-tail manner, and the SMP-LTD domains of MMM1 and MDM12 generate a continuous hydrophobic tunnel for phospholipid trafficking.

It is found in the mitochondrion outer membrane. Its subcellular location is the endoplasmic reticulum membrane. In terms of biological role, component of the ERMES/MDM complex, which serves as a molecular tether to connect the endoplasmic reticulum (ER) and mitochondria. Components of this complex are involved in the control of mitochondrial shape and protein biogenesis, and function in nonvesicular lipid trafficking between the ER and mitochondria. MDM12 is required for the interaction of the ER-resident membrane protein MMM1 and the outer mitochondrial membrane-resident beta-barrel protein MDM10. The MDM12-MMM1 subcomplex functions in the major beta-barrel assembly pathway that is responsible for biogenesis of all mitochondrial outer membrane beta-barrel proteins, and acts in a late step after the SAM complex. The MDM10-MDM12-MMM1 subcomplex further acts in the TOM40-specific pathway after the action of the MDM12-MMM1 complex. Essential for establishing and maintaining the structure of mitochondria and maintenance of mtDNA nucleoids. In Postia placenta (strain ATCC 44394 / Madison 698-R) (Brown rot fungus), this protein is Mitochondrial distribution and morphology protein 12.